Consider the following 485-residue polypeptide: Pre-glycoprotein polyprotein GP complex (485 aa).

A lipid anchor (N-myristoyl glycine; by host) is attached at G2. The Extracellular portion of the chain corresponds to 2-17 (GQFISFMQEIPTFLQE). A helical transmembrane segment spans residues 18–33 (ALNIALVAVSLIAIIK). The Cytoplasmic portion of the chain corresponds to 34–58 (GVVNLYKSGLFQFFVFLALAGRSCT). C57 contributes to the Zn(2+) binding site. Over 59 to 424 (EEAFKIGLHT…QGKTPLTLVD (366 aa)) the chain is Extracellular. Intrachain disulfides connect C92-C226, C135-C164, C207-C213, C271-C284, C293-C302, and C356-C377. 2 N-linked (GlcNAc...) asparagine; by host glycosylation sites follow: N95 and N105. 2 N-linked (GlcNAc...) asparagine; by host glycosylation sites follow: N166 and N178. Residues 250–286 (LKAFFSWSLTDSSGKDTPGGYCLEEWMLVAAKMKCFG) form a fusion region. Residues 287–355 (NTAVAKCNLN…KIRELMSVPY (69 aa)) form an HR1 region. N357, N365, N382, and N387 each carry an N-linked (GlcNAc...) asparagine; by host glycan. Positions 360–423 (KFWYVNHTLS…RQGKTPLTLV (64 aa)) are HR2. A helical transmembrane segment spans residues 425-445 (ICFWSTVFFTASLFLHLVGIP). At 446–485 (THRHIRGEACPLPHRLNSLGGCRCGKYPNLKKPTVWRRGH) the chain is on the cytoplasmic side. Residues H447, H449, C455, H459, C467, C469, and H485 each contribute to the Zn(2+) site.

Belongs to the arenaviridae GPC protein family. In terms of assembly, interacts with glycoprotein G2. Part of the GP complex (GP-C) together with glycoprotein G1 and glycoprotein G2. The GP-complex interacts with protein Z, which interacts with ribonucleocapsid; these interactions may induce virion budding. As to quaternary structure, homotrimer; disulfide-linked. In pre-fusion state, G1 homotrimers bind G2 homotrimers via ionic interactions. Part of the GP complex (GP-C) together with glycoprotein G2 and the stable signal peptide. Interacts with host TFRC. The GP-complex interacts with protein Z, which interacts with ribonucleocapsid; these interactions may induce virion budding. Homotrimer. Interacts with the stable signal peptide. In pre-fusion state, G2 homotrimers bind G1 homotrimers via ionic interactions. Part of the GP complex (GP-C) together with glycoprotein G1 and the stable signal peptide. Acidification in the endosome triggers rearrangements, which ultimately leads to a 6 helix bundle formed by the two heptad repeat domains (HR1 and HR2) in post-fusion state. The GP-complex interacts with protein Z, which interacts with ribonucleocapsid; these interactions may induce virion budding. In terms of processing, specific enzymatic cleavages in vivo yield mature proteins. GP-C polyprotein is cleaved in the endoplasmic reticulum by the host protease MBTPS1. Only cleaved glycoprotein is incorporated into virions. The SSP remains stably associated with the GP complex following cleavage by signal peptidase and plays crucial roles in the trafficking of GP through the secretory pathway. Post-translationally, myristoylation is necessary for GP2-mediated fusion activity.

The protein localises to the virion membrane. Its subcellular location is the host endoplasmic reticulum membrane. It localises to the host Golgi apparatus membrane. The protein resides in the host cell membrane. Its function is as follows. Functions as a cleaved signal peptide that is retained as the third component of the GP complex (GP-C). Helps to stabilize the spike complex in its native conformation. The SSP is required for efficient glycoprotein expression, post-translational maturation cleavage of G1 and G2, glycoprotein transport to the cell surface plasma membrane, formation of infectious virus particles, and acid pH-dependent glycoprotein-mediated cell fusion. Forms the virion spikes together with glycoprotein G2. The glycoprotein spike trimers are connected to the underlying matrix. Mediates virus attachment to host TFRC. This attachment induces virion internalization predominantly through clathrin-mediated endocytosis. Functionally, forms the virion spikes together with glycoprotein G1. The glycoprotein spike trimers are connected to the underlying matrix. Class I viral fusion protein that directs fusion of viral and host endosomal membranes, leading to delivery of the nucleocapsid into the cytoplasm. Membrane fusion is mediated by irreversible conformational changes induced by acidification. The sequence is that of Pre-glycoprotein polyprotein GP complex from Junin mammarenavirus (JUNV).